We begin with the raw amino-acid sequence, 226 residues long: ATP synthase subunit a (226 aa).

7 helical membrane-spanning segments follow: residues 18–38 (FIIGFHTLLVAVILLILARYA), 44–64 (VVPSGIQNVFEFIISGIISFA), 79–99 (LAATIAFLVFFGNAIGIIPGF), 105–125 (SWSFTLVLALVVFFYYHFEGI), 137–157 (FMGPVWWLAPLMFPVEIISHF), 177–197 (FLLVMLMLAPWIVPVAPFAIL), and 202–222 (LLQAFVFMILTYVYIHGAVVV).

This sequence belongs to the ATPase A chain family. In terms of assembly, F-type ATPases have 2 components, CF(1) - the catalytic core - and CF(0) - the membrane proton channel. CF(1) has five subunits: alpha(3), beta(3), gamma(1), delta(1), epsilon(1). CF(0) has three main subunits: a(1), b(2) and c(9-12). The alpha and beta chains form an alternating ring which encloses part of the gamma chain. CF(1) is attached to CF(0) by a central stalk formed by the gamma and epsilon chains, while a peripheral stalk is formed by the delta and b chains.

The protein resides in the cell inner membrane. Key component of the proton channel; it plays a direct role in the translocation of protons across the membrane. This Helicobacter hepaticus (strain ATCC 51449 / 3B1) protein is ATP synthase subunit a.